Consider the following 691-residue polypeptide: MPRQFPLEKTRNIGIMAHIDAGKTTTTERILFYTGKVYKMGEVHEGTATMDWMEQEQERGITITSAATTCEWRGHRINIIDTPGHVDFTVEVERSLRVLDGAIAVFCAKGGVEPQSETVWRQADKYRVPRIAYVNKMDIMGANFFNVIEMMKERLGANPVAIQVPIGKEDTFKGVVDLLTMKAIIYVDDLGKVSQETEIPDEVKDIAEEYRIKLLEAVAETDEEIMMKYLEGEEITVEELKAAIRKATINMQMTPVLCGSSYRNKGVQPLLDAVVDYLPSPVDIAAVKGFSPDTGEEIERKTSEDEPFCALAFKIMSDPYVGKLTFLRVYSGVLQAGSYVYNSTKNKKERVGRLLQMHANHREDIDAVYAGDICAAIGLSNTTTGDTLCDENHPIILESMEFPEPVIQVAIEPKTKADQEKMGIALQRLAEEDPTFKISTNHETGQTLIAGMGELHLEIIVDRMKREFKVEVNVGKPQVAYKETIKKSVKVEGKYIRQSGGRGQYGHVWLELEPLERGGGYEFVNKIVGGVIPKEFIPSVDAGVQEAMQSGVLAGYPVVDVRVTLFDGSYHEVDSSDMAFRIAAAQAFREGMKKAEPVLLEPIMKVEVVVPEEYMGDVMGDINARRGRIEGMELRGNAQVIRAYVPLAEMFGYATDLRSKTQGRGTYTMQFDHYEEVPKNIADKILEMKNK.

In terms of domain architecture, tr-type G spans 8–282; it reads EKTRNIGIMA…AVVDYLPSPV (275 aa). Residues 17 to 24, 81 to 85, and 135 to 138 each bind GTP; these read AHIDAGKT, DTPGH, and NKMD.

It belongs to the TRAFAC class translation factor GTPase superfamily. Classic translation factor GTPase family. EF-G/EF-2 subfamily.

Its subcellular location is the cytoplasm. Functionally, catalyzes the GTP-dependent ribosomal translocation step during translation elongation. During this step, the ribosome changes from the pre-translocational (PRE) to the post-translocational (POST) state as the newly formed A-site-bound peptidyl-tRNA and P-site-bound deacylated tRNA move to the P and E sites, respectively. Catalyzes the coordinated movement of the two tRNA molecules, the mRNA and conformational changes in the ribosome. In Caldicellulosiruptor saccharolyticus (strain ATCC 43494 / DSM 8903 / Tp8T 6331), this protein is Elongation factor G.